The chain runs to 220 residues: Deoxyribose-phosphate aldolase (220 aa).

Asp89 functions as the Proton donor/acceptor in the catalytic mechanism. The Schiff-base intermediate with acetaldehyde role is filled by Lys151. Lys180 (proton donor/acceptor) is an active-site residue.

The protein belongs to the DeoC/FbaB aldolase family. DeoC type 1 subfamily.

Its subcellular location is the cytoplasm. It carries out the reaction 2-deoxy-D-ribose 5-phosphate = D-glyceraldehyde 3-phosphate + acetaldehyde. It participates in carbohydrate degradation; 2-deoxy-D-ribose 1-phosphate degradation; D-glyceraldehyde 3-phosphate and acetaldehyde from 2-deoxy-alpha-D-ribose 1-phosphate: step 2/2. Catalyzes a reversible aldol reaction between acetaldehyde and D-glyceraldehyde 3-phosphate to generate 2-deoxy-D-ribose 5-phosphate. This Staphylococcus carnosus (strain TM300) protein is Deoxyribose-phosphate aldolase.